A 295-amino-acid polypeptide reads, in one-letter code: Ethanolamine ammonia-lyase small subunit (295 aa).

Adenosylcob(III)alamin contacts are provided by Val207, Glu228, and Cys258.

It belongs to the EutC family. The basic unit is a heterodimer which dimerizes to form tetramers. The heterotetramers trimerize; 6 large subunits form a core ring with 6 small subunits projecting outwards. The cofactor is adenosylcob(III)alamin.

It localises to the bacterial microcompartment. The enzyme catalyses ethanolamine = acetaldehyde + NH4(+). Its pathway is amine and polyamine degradation; ethanolamine degradation. Functionally, catalyzes the deamination of various vicinal amino-alcohols to oxo compounds. Allows this organism to utilize ethanolamine as the sole source of nitrogen and carbon in the presence of external vitamin B12. This Shigella sonnei (strain Ss046) protein is Ethanolamine ammonia-lyase small subunit.